The primary structure comprises 554 residues: Perforin-1 (554 aa).

An N-terminal signal peptide occupies residues 1 to 20 (MATCLFLLGLFLLLPRPVPA). Intrachain disulfides connect cysteine 22-cysteine 75, cysteine 30-cysteine 72, and cysteine 101-cysteine 175. The 349-residue stretch at 26–374 (TRSECKQKHK…HYIMSRARWQ (349 aa)) folds into the MACPF domain. Residues 128–148 (WRVGLDVNPRPEANMRASVAG) form a beta stranded membrane-spanning segment. Asparagine 204 carries N-linked (GlcNAc...) asparagine glycosylation. 4 disulfides stabilise this stretch: cysteine 241-cysteine 407, cysteine 376-cysteine 392, cysteine 380-cysteine 394, and cysteine 396-cysteine 406. Residues 256 to 278 (CLNVEAQVSIGAQASVSSEYKAC) traverse the membrane as a beta stranded segment. Residue asparagine 375 is glycosylated (N-linked (GlcNAc...) asparagine). The 33-residue stretch at 375 to 407 (NCSRPCRSGQHKSSHDSCQCECQDSKVTNQDCC) folds into the EGF-like domain. One can recognise a C2 domain in the interval 395 to 513 (ECQDSKVTNQ…FHEVTCELNH (119 aa)). Positions 428, 429, 432, 433, 435, 454, 467, 483, 484, 485, 488, 489, 490, and 491 each coordinate Ca(2+). Cystine bridges form between cysteine 496-cysteine 509 and cysteine 524-cysteine 533. The N-linked (GlcNAc...) asparagine glycan is linked to asparagine 548.

The protein belongs to the complement C6/C7/C8/C9 family. In terms of assembly, monomer, as soluble protein. Homooligomer; homooligomerizes to form a pore-forming ring. Ca(2+) serves as cofactor. Post-translationally, N-glycosylated. The glycosylation sites are facing the interior of the pore. In terms of tissue distribution, detected in cytotoxic T-lymphocytes and natural killer cells.

It is found in the cytolytic granule. It localises to the secreted. Its subcellular location is the cell membrane. The protein resides in the endosome lumen. Its function is as follows. Pore-forming protein that plays a key role in granzyme-mediated programmed cell death, and in defense against virus-infected or neoplastic cells. Can insert into the membrane of target cells in its calcium-bound form, oligomerize and form large pores. Promotes cytolysis and apoptosis of target cells by mediating the passage and uptake of cytotoxic granzymes. Facilitates the delivery of cationic cargo protein, while anionic or neural proteins are not delivered efficiently. Perforin pores allow the release of mature caspase-7 (CASP7) into the extracellular milieu. The polypeptide is Perforin-1 (Prf1) (Mus musculus (Mouse)).